Here is a 607-residue protein sequence, read N- to C-terminus: Leucine-rich repeat-containing protein 63 (607 aa).

7 LRR repeats span residues Gln357–Leu378, Asn380–Leu401, Tyr403–Leu424, Tyr426–Leu447, Ser449–Leu470, Asn471–Arg497, and Leu498–Lys524.

This chain is Leucine-rich repeat-containing protein 63 (Lrrc63), found in Rattus norvegicus (Rat).